The following is a 798-amino-acid chain: Gelsolin (798 aa).

An N-terminal signal peptide occupies residues 1–28; sequence MDASGAATMAVLSSLLVFLALSSSLCSA. The tract at residues 57 to 181 is actin-severing; that stretch reads RVMHPSFANA…YEQGGVGTGF (125 aa). Residues 78-131 form a Gelsolin-like 1 repeat; sequence ENFEPVIYPKTNYGKFYTGDSFIVLNTIENKKDKKLSWDVHFWLGLETSTDEAG. Tyr90 bears the Phosphotyrosine; by SRC mark. Residues 128-131 are actin-actin interfilament contact point; it reads DEAG. Residues 167–174 and 193–201 contribute to the a 1,2-diacyl-sn-glycero-3-phospho-(1D-myo-inositol-4,5-bisphosphate) site; these read KNGIRYEQ and RLFQVKGKR. Gelsolin-like repeat units follow at residues 203-243, 322-365, 474-524, and 583-625; these read VRVR…VEKL, LKVD…KEKT, IVVS…AARK, and VHAS…FEKQ. Residues 451–792 form an actin-binding, Ca-sensitive region; that stretch reads MPDHGQNVIE…SYEDMKQLVI (342 aa). Asp599 is a Ca(2+) binding site. At Tyr612 the chain carries Phosphotyrosine; by SRC. Glu623 lines the Ca(2+) pocket. Tyr662 carries the phosphotyrosine; by SRC modification. The Gelsolin-like 6 repeat unit spans residues 689–730; it reads LKVEEVAQYEQEDLDSDDIMLLDAGDEIYLWVGYGVSEEENG. Asp705, Asp706, and Glu728 together coordinate Ca(2+).

The protein belongs to the villin/gelsolin family. Binds to actin and to fibronectin. Isoform 1 and isoform 2 are ubiquitously expressed in early embryo. Isoform 1 is expressed in the fat body, and is abundant in hemolymph. Isoform 2 is expressed in parts of the gut.

It localises to the cytoplasm. Its subcellular location is the cytoskeleton. It is found in the secreted. In terms of biological role, calcium-regulated, actin-modulating protein that binds to the plus (or barbed) ends of actin monomers or filaments, preventing monomer exchange (end-blocking or capping). It can promote the assembly of monomers into filaments (nucleation) as well as sever filaments already formed. This Drosophila melanogaster (Fruit fly) protein is Gelsolin (Gel).